Consider the following 126-residue polypeptide: Nascent polypeptide-associated complex protein (126 aa).

Residues 10-77 enclose the NAC-A/B domain; that stretch reads PRMMKQMQKM…AKKVAKAEEK (68 aa).

Belongs to the NAC-alpha family. In terms of assembly, homodimer. Interacts with the ribosome. Binds ribosomal RNA.

Functionally, contacts the emerging nascent chain on the ribosome. The protein is Nascent polypeptide-associated complex protein of Methanococcus maripaludis (strain C5 / ATCC BAA-1333).